The following is a 469-amino-acid chain: MNPNQKIITIGSICMVVGIISLILQIGNIISIWVSHSIQTGNQNHPETCNQSIITYENNTWVNQTYVNISNTNVVAGQDATSVILTGNSSLCPISGWAIYSKDNGIRIGSKGDVFVIREPFISCSHLECRTFFLTQGALLNDKHSNGTVKDRSPYRTLMSCPVGEAPSPYNSRFESVAWSASACHDGMGWLTIGISGPDNGAVAVLKYNGIITDTIKSWRNNILRTQESECACVNGSCFTIMTDGPSNGQASYKILKIEKGKVTKSIELNAPNYHYEECSCYPDTGKVMCVCRDNWHGSNRPWVSFDQNLDYQIGYICSGVFGDNPRPNDGTGSCGPVSSNGANGIKGFSFRYDNGVWIGRTKSTSSRSGFEMIWDPNGWTETDSSFSVRQDIVAITDWSGYSGSFVQHPELTGLDCMRPCFWVELIRGQPKENTIWTSGSSISFCGVNSDTVGWSWPDGAELPFSIDK.

The Intravirion portion of the chain corresponds to 1–6 (MNPNQK). Residues 7–27 (IITIGSICMVVGIISLILQIG) traverse the membrane as a helical segment. Positions 11-33 (GSICMVVGIISLILQIGNIISIW) are involved in apical transport and lipid raft association. The Virion surface segment spans residues 28 to 469 (NIISIWVSHS…GAELPFSIDK (442 aa)). The tract at residues 36-90 (HSIQTGNQNHPETCNQSIITYENNTWVNQTYVNISNTNVVAGQDATSVILTGNSS) is hypervariable stalk region. N-linked (GlcNAc...) asparagine; by host glycans are attached at residues Asn50, Asn58, Asn63, Asn68, and Asn88. The head of neuraminidase stretch occupies residues 91–469 (LCPISGWAIY…GAELPFSIDK (379 aa)). 8 disulfide bridges follow: Cys92–Cys417, Cys124–Cys129, Cys184–Cys231, Cys233–Cys238, Cys279–Cys292, Cys281–Cys290, Cys318–Cys335, and Cys421–Cys446. Substrate is bound at residue Arg118. N-linked (GlcNAc...) asparagine; by host glycosylation is present at Asn146. Asp151 functions as the Proton donor/acceptor in the catalytic mechanism. Arg152 lines the substrate pocket. A glycan (N-linked (GlcNAc...) asparagine; by host) is linked at Asn235. 277–278 (EE) contributes to the substrate binding site. Residue Arg293 participates in substrate binding. The Ca(2+) site is built by Asp294, Gly298, Asp324, and Asn344. Arg368 serves as a coordination point for substrate. Tyr402 serves as the catalytic Nucleophile.

Belongs to the glycosyl hydrolase 34 family. Homotetramer. Ca(2+) serves as cofactor. N-glycosylated.

It is found in the virion membrane. Its subcellular location is the host apical cell membrane. It carries out the reaction Hydrolysis of alpha-(2-&gt;3)-, alpha-(2-&gt;6)-, alpha-(2-&gt;8)- glycosidic linkages of terminal sialic acid residues in oligosaccharides, glycoproteins, glycolipids, colominic acid and synthetic substrates.. With respect to regulation, inhibited by the neuraminidase inhibitors zanamivir (Relenza) and oseltamivir (Tamiflu). These drugs interfere with the release of progeny virus from infected cells and are effective against all influenza strains. Resistance to neuraminidase inhibitors is quite rare. Functionally, catalyzes the removal of terminal sialic acid residues from viral and cellular glycoconjugates. Cleaves off the terminal sialic acids on the glycosylated HA during virus budding to facilitate virus release. Additionally helps virus spread through the circulation by further removing sialic acids from the cell surface. These cleavages prevent self-aggregation and ensure the efficient spread of the progeny virus from cell to cell. Otherwise, infection would be limited to one round of replication. Described as a receptor-destroying enzyme because it cleaves a terminal sialic acid from the cellular receptors. May facilitate viral invasion of the upper airways by cleaving the sialic acid moieties on the mucin of the airway epithelial cells. Likely to plays a role in the budding process through its association with lipid rafts during intracellular transport. May additionally display a raft-association independent effect on budding. Plays a role in the determination of host range restriction on replication and virulence. Sialidase activity in late endosome/lysosome traffic seems to enhance virus replication. The protein is Neuraminidase of Aves (Human).